A 144-amino-acid polypeptide reads, in one-letter code: Large ribosomal subunit protein uL11 (144 aa).

This sequence belongs to the universal ribosomal protein uL11 family. In terms of assembly, part of the ribosomal stalk of the 50S ribosomal subunit. Interacts with L10 and the large rRNA to form the base of the stalk. L10 forms an elongated spine to which L12 dimers bind in a sequential fashion forming a multimeric L10(L12)X complex. In terms of processing, one or more lysine residues are methylated.

Its function is as follows. Forms part of the ribosomal stalk which helps the ribosome interact with GTP-bound translation factors. The protein is Large ribosomal subunit protein uL11 of Neisseria meningitidis serogroup C (strain 053442).